A 309-amino-acid chain; its full sequence is Malate dehydrogenase (309 aa).

Residues 10 to 15 (GAGNVG) and Asp34 contribute to the NAD(+) site. Substrate is bound by residues Arg83 and Arg89. NAD(+) contacts are provided by residues Asn96 and 119–121 (VSN). Asn121 and Arg152 together coordinate substrate. Residue His176 is the Proton acceptor of the active site.

This sequence belongs to the LDH/MDH superfamily. MDH type 3 family.

The catalysed reaction is (S)-malate + NAD(+) = oxaloacetate + NADH + H(+). Its function is as follows. Catalyzes the reversible oxidation of malate to oxaloacetate. The chain is Malate dehydrogenase from Heliobacterium modesticaldum (strain ATCC 51547 / Ice1).